The chain runs to 170 residues: ATP synthase subunit b (170 aa).

Residues 22-41 (VLNWAVVVFGLYKFLPGFLG) form a helical membrane-spanning segment.

Belongs to the ATPase B chain family. In terms of assembly, F-type ATPases have 2 components, F(1) - the catalytic core - and F(0) - the membrane proton channel. F(1) has five subunits: alpha(3), beta(3), gamma(1), delta(1), epsilon(1). F(0) has four main subunits: a(1), b(1), b'(1) and c(10-14). The alpha and beta chains form an alternating ring which encloses part of the gamma chain. F(1) is attached to F(0) by a central stalk formed by the gamma and epsilon chains, while a peripheral stalk is formed by the delta, b and b' chains.

It localises to the cellular thylakoid membrane. F(1)F(0) ATP synthase produces ATP from ADP in the presence of a proton or sodium gradient. F-type ATPases consist of two structural domains, F(1) containing the extramembraneous catalytic core and F(0) containing the membrane proton channel, linked together by a central stalk and a peripheral stalk. During catalysis, ATP synthesis in the catalytic domain of F(1) is coupled via a rotary mechanism of the central stalk subunits to proton translocation. Functionally, component of the F(0) channel, it forms part of the peripheral stalk, linking F(1) to F(0). The protein is ATP synthase subunit b of Prochlorococcus marinus subsp. pastoris (strain CCMP1986 / NIES-2087 / MED4).